The sequence spans 466 residues: UDP-N-acetylmuramoylalanine--D-glutamate ligase (466 aa).

127–133 (GSNGKST) provides a ligand contact to ATP.

It belongs to the MurCDEF family.

Its subcellular location is the cytoplasm. The enzyme catalyses UDP-N-acetyl-alpha-D-muramoyl-L-alanine + D-glutamate + ATP = UDP-N-acetyl-alpha-D-muramoyl-L-alanyl-D-glutamate + ADP + phosphate + H(+). The protein operates within cell wall biogenesis; peptidoglycan biosynthesis. In terms of biological role, cell wall formation. Catalyzes the addition of glutamate to the nucleotide precursor UDP-N-acetylmuramoyl-L-alanine (UMA). The polypeptide is UDP-N-acetylmuramoylalanine--D-glutamate ligase (Ruegeria pomeroyi (strain ATCC 700808 / DSM 15171 / DSS-3) (Silicibacter pomeroyi)).